Reading from the N-terminus, the 209-residue chain is Cytidylate kinase (209 aa).

7–15 contributes to the ATP binding site; it reads GPAASGKGT.

This sequence belongs to the cytidylate kinase family. Type 1 subfamily.

It localises to the cytoplasm. It carries out the reaction CMP + ATP = CDP + ADP. The catalysed reaction is dCMP + ATP = dCDP + ADP. This Afipia carboxidovorans (strain ATCC 49405 / DSM 1227 / KCTC 32145 / OM5) (Oligotropha carboxidovorans) protein is Cytidylate kinase.